The chain runs to 156 residues: Small ribosomal subunit protein uS7 (156 aa).

Belongs to the universal ribosomal protein uS7 family. As to quaternary structure, part of the 30S ribosomal subunit. Contacts proteins S9 and S11.

One of the primary rRNA binding proteins, it binds directly to 16S rRNA where it nucleates assembly of the head domain of the 30S subunit. Is located at the subunit interface close to the decoding center, probably blocks exit of the E-site tRNA. This Listeria innocua serovar 6a (strain ATCC BAA-680 / CLIP 11262) protein is Small ribosomal subunit protein uS7.